Here is a 68-residue protein sequence, read N- to C-terminus: Adipokinetic prohormone type 1 (68 aa).

A signal peptide spans 1–20 (MNYVSIFVLIVACLCVLADA). At Gln21 the chain carries Pyrrolidone carboxylic acid. Gly30 is subject to Glycine amide. Positions 34–68 (GAVAATMSCRSEETIAAIYKLIQNEAERLLLCQKP) are excised as a propeptide.

In terms of tissue distribution, expressed in antennal lobe (AL), corpora cardiaca (CC), corpora allata (CA) and gnathal ganglion (GNG) (at protein level). Expression in CC and CA detected in all animals, expression in GNG in some animals and in AL in few animals (at protein level).

Its subcellular location is the secreted. Functionally, this hormone, released from cells in the corpora cardiaca, causes release of diglycerides from the fat body and stimulation of muscles to use these diglycerides as an energy source during energy-demanding processes. This Agrotis ipsilon (Black cutworm moth) protein is Adipokinetic prohormone type 1.